An 83-amino-acid chain; its full sequence is Small ribosomal subunit protein bS16 (83 aa).

It belongs to the bacterial ribosomal protein bS16 family.

This is Small ribosomal subunit protein bS16 from Pseudomonas aeruginosa (strain LESB58).